Consider the following 262-residue polypeptide: Hydroxyethylthiazole kinase (262 aa).

Met-50 serves as a coordination point for substrate. Arg-125 and Thr-171 together coordinate ATP. Gly-198 contributes to the substrate binding site.

It belongs to the Thz kinase family. Mg(2+) is required as a cofactor.

It carries out the reaction 5-(2-hydroxyethyl)-4-methylthiazole + ATP = 4-methyl-5-(2-phosphooxyethyl)-thiazole + ADP + H(+). It participates in cofactor biosynthesis; thiamine diphosphate biosynthesis; 4-methyl-5-(2-phosphoethyl)-thiazole from 5-(2-hydroxyethyl)-4-methylthiazole: step 1/1. Catalyzes the phosphorylation of the hydroxyl group of 4-methyl-5-beta-hydroxyethylthiazole (THZ). The polypeptide is Hydroxyethylthiazole kinase (Escherichia coli O157:H7).